The following is a 396-amino-acid chain: NADH-quinone oxidoreductase subunit D 2 (396 aa).

Belongs to the complex I 49 kDa subunit family. NDH-1 is composed of 14 different subunits. Subunits NuoB, C, D, E, F, and G constitute the peripheral sector of the complex.

Its subcellular location is the cell inner membrane. It carries out the reaction a quinone + NADH + 5 H(+)(in) = a quinol + NAD(+) + 4 H(+)(out). Functionally, NDH-1 shuttles electrons from NADH, via FMN and iron-sulfur (Fe-S) centers, to quinones in the respiratory chain. The immediate electron acceptor for the enzyme in this species is believed to be ubiquinone. Couples the redox reaction to proton translocation (for every two electrons transferred, four hydrogen ions are translocated across the cytoplasmic membrane), and thus conserves the redox energy in a proton gradient. The protein is NADH-quinone oxidoreductase subunit D 2 of Beijerinckia indica subsp. indica (strain ATCC 9039 / DSM 1715 / NCIMB 8712).